A 562-amino-acid polypeptide reads, in one-letter code: Putative transport protein ECA2683 (562 aa).

Transmembrane regions (helical) follow at residues 8–28 (LLNG…LCLG), 32–52 (LGPV…LLGQ), 66–86 (FMLF…SIFF), 93–113 (FMLA…LGKL), 116–136 (WGIG…PVLV), and 158–178 (HLSL…IFGA). 2 consecutive RCK C-terminal domains span residues 202-288 (LDVD…NFRD) and 290-373 (KEVF…RIGF). Helical transmembrane passes span 383 to 403 (LLAF…TIQF), 406 to 426 (FTFG…LGFL), 447 to 467 (FGLM…INSS), 478 to 498 (SGLI…AYVL), and 537 to 557 (GTYA…VVIW).

The protein belongs to the AAE transporter (TC 2.A.81) family. YbjL subfamily.

The protein localises to the cell membrane. In Pectobacterium atrosepticum (strain SCRI 1043 / ATCC BAA-672) (Erwinia carotovora subsp. atroseptica), this protein is Putative transport protein ECA2683.